We begin with the raw amino-acid sequence, 102 residues long: PqqA binding protein (102 aa).

The protein belongs to the PqqD family. As to quaternary structure, monomer. Interacts with PqqE.

The protein operates within cofactor biosynthesis; pyrroloquinoline quinone biosynthesis. Functionally, functions as a PqqA binding protein and presents PqqA to PqqE, in the pyrroloquinoline quinone (PQQ) biosynthetic pathway. This is PqqA binding protein from Rhodopseudomonas palustris (strain BisB5).